A 1085-amino-acid polypeptide reads, in one-letter code: Solute carrier family 12 member 4 (1085 aa).

The Cytoplasmic segment spans residues Met-1–Gly-119. A Phosphoserine modification is found at Ser-24. Residues Tyr-28–Ser-46 show a composition bias toward basic and acidic residues. The segment at Tyr-28 to Ser-47 is disordered. Phosphoserine occurs at positions 47, 59, 81, and 88. The discontinuously helical transmembrane segment at Thr-120–Leu-141 threads the bilayer. The K(+) site is built by Asn-131 and Ile-132. The Extracellular portion of the chain corresponds to Thr-142–Gly-149. A helical membrane pass occupies residues Val-150–Ser-172. The Cytoplasmic segment spans residues Ala-173–Glu-196. A helical transmembrane segment spans residues Phe-197–Leu-225. Residue Tyr-216 coordinates K(+). The Extracellular segment spans residues Thr-226–Leu-248. Asn-245 carries N-linked (GlcNAc...) asparagine glycosylation. Helical transmembrane passes span Asn-249–Lys-271 and Tyr-272–Lys-297. Topologically, residues Ser-298 to Ser-419 are extracellular. The cysteines at positions 308 and 323 are disulfide-linked. N-linked (GlcNAc...) asparagine glycans are attached at residues Asn-312, Asn-331, and Asn-347. An intrachain disulfide couples Cys-343 to Cys-353. The helical transmembrane segment at Phe-420 to Arg-440 threads the bilayer. K(+) contacts are provided by Pro-429 and Thr-432. 3 residues coordinate chloride: Gly-433, Ile-434, and Met-435. The Cytoplasmic segment spans residues Ser-441–Ser-450. Residues Ile-451–Phe-473 form a helical membrane-spanning segment. Residues Gly-474–Pro-504 are Extracellular-facing. Residues Trp-505 to Gln-531 form a helical membrane-spanning segment. Topologically, residues Ala-532 to Pro-554 are cytoplasmic. The next 2 helical transmembrane spans lie at Thr-555 to Asp-575 and Met-576 to Val-598. Position 589 (Tyr-589) interacts with chloride. Over Gln-599–Lys-612 the chain is Cytoplasmic. Transmembrane regions (helical) follow at residues Tyr-613–Trp-635 and Tyr-636–Tyr-651. The Cytoplasmic portion of the chain corresponds to Ile-652–Ser-1085. The tract at residues Ile-665 to Glu-681 is scissor helix. ATP-binding residues include Leu-697, Lys-699, Lys-707, Tyr-708, and Val-730. Residue Ser-734 is modified to Phosphoserine. Residues Gly-794, Trp-795, and Tyr-797 each contribute to the ATP site. Phosphoserine is present on residues Ser-916 and Ser-967. Phosphothreonine is present on Thr-983. Ser-1050 is subject to Phosphoserine.

This sequence belongs to the SLC12A transporter family. K/Cl co-transporter subfamily. As to quaternary structure, homodimer; adopts a domain-swap conformation at the scissor helices connecting the transmembrane domain and C-terminal domain. Heterodimer with other K-Cl cotransporters. In terms of processing, N-glycosylated. Post-translationally, phosphorylated, phosphorylation may regulate transporter activity.

It localises to the cell membrane. It carries out the reaction K(+)(in) + chloride(in) = K(+)(out) + chloride(out). Its activity is regulated as follows. Inhibited by WNK3. Mediates electroneutral potassium-chloride cotransport when activated by cell swelling. May contribute to cell volume homeostasis in single cells. May be involved in the regulation of basolateral Cl(-) exit in NaCl absorbing epithelia. The protein is Solute carrier family 12 member 4 (SLC12A4) of Oryctolagus cuniculus (Rabbit).